Consider the following 860-residue polypeptide: Rod cGMP-specific 3',5'-cyclic phosphodiesterase subunit alpha (860 aa).

The residue at position 2 (Gly-2) is an N-acetylglycine. GAF domains follow at residues 73–222 and 254–431; these read QTEK…NLIM and DIER…GWSV. A PDEase domain is found at 483–816; it reads EEEELAEILQ…KEWKALADEY (334 aa). His-559 functions as the Proton donor in the catalytic mechanism. The a divalent metal cation site is built by His-563, His-599, Asp-600, and Asp-720. The interval 821–860 is disordered; the sequence is KVQEEKKQKQQSAKSAAAGNQPGGNPSPGGATTSKSCCIQ. Residues 830–851 are compositionally biased toward low complexity; the sequence is QQSAKSAAAGNQPGGNPSPGGA. At Cys-857 the chain carries Cysteine methyl ester. A lipid anchor (S-farnesyl cysteine) is attached at Cys-857. The propeptide at 858–860 is removed in mature form; it reads CIQ.

Belongs to the cyclic nucleotide phosphodiesterase family. In terms of assembly, oligomer composed of two catalytic chains (alpha and beta), an inhibitory chain (gamma) and the delta chain. A divalent metal cation serves as cofactor.

It is found in the cell membrane. Its subcellular location is the cell projection. The protein localises to the cilium. The protein resides in the photoreceptor outer segment. The catalysed reaction is 3',5'-cyclic GMP + H2O = GMP + H(+). Functionally, rod-specific cGMP phosphodiesterase that catalyzes the hydrolysis of 3',5'-cyclic GMP. This protein participates in processes of transmission and amplification of the visual signal. The polypeptide is Rod cGMP-specific 3',5'-cyclic phosphodiesterase subunit alpha (Homo sapiens (Human)).